Here is a 311-residue protein sequence, read N- to C-terminus: Methionyl-tRNA formyltransferase (311 aa).

(6S)-5,6,7,8-tetrahydrofolate is bound at residue 112-115 (SLLP).

The protein belongs to the Fmt family.

It catalyses the reaction L-methionyl-tRNA(fMet) + (6R)-10-formyltetrahydrofolate = N-formyl-L-methionyl-tRNA(fMet) + (6S)-5,6,7,8-tetrahydrofolate + H(+). Attaches a formyl group to the free amino group of methionyl-tRNA(fMet). The formyl group appears to play a dual role in the initiator identity of N-formylmethionyl-tRNA by promoting its recognition by IF2 and preventing the misappropriation of this tRNA by the elongation apparatus. This chain is Methionyl-tRNA formyltransferase, found in Rhizobium leguminosarum bv. trifolii (strain WSM2304).